Here is a 348-residue protein sequence, read N- to C-terminus: 4-hydroxy-2-oxovalerate aldolase 1 (348 aa).

In terms of domain architecture, Pyruvate carboxyltransferase spans 8-260 (ITVHDMTLRD…QTGVDVWAIQ (253 aa)). 16-17 (RD) provides a ligand contact to substrate. Aspartate 17 serves as a coordination point for Mn(2+). Catalysis depends on histidine 20, which acts as the Proton acceptor. Substrate-binding residues include serine 170 and histidine 199. 2 residues coordinate Mn(2+): histidine 199 and histidine 201. Tyrosine 290 lines the substrate pocket.

This sequence belongs to the 4-hydroxy-2-oxovalerate aldolase family.

It carries out the reaction (S)-4-hydroxy-2-oxopentanoate = acetaldehyde + pyruvate. The protein is 4-hydroxy-2-oxovalerate aldolase 1 of Cupriavidus metallidurans (strain ATCC 43123 / DSM 2839 / NBRC 102507 / CH34) (Ralstonia metallidurans).